We begin with the raw amino-acid sequence, 156 residues long: uncharacterized protein (156 aa).

3 helical membrane passes run 42–59 (LLMMTFAIVNLADYMTTV), 79–98 (ASFLLLKIAIVATAFALLLY), and 105–127 (SLGRGIYIGLVAGLAISTAVLGI).

The protein resides in the cell membrane. This is an uncharacterized protein from Archaeoglobus fulgidus (strain ATCC 49558 / DSM 4304 / JCM 9628 / NBRC 100126 / VC-16).